Here is a 128-residue protein sequence, read N- to C-terminus: Large ribosomal subunit protein bL12 (128 aa).

This sequence belongs to the bacterial ribosomal protein bL12 family. Homodimer. Part of the ribosomal stalk of the 50S ribosomal subunit. Forms a multimeric L10(L12)X complex, where L10 forms an elongated spine to which 2 to 4 L12 dimers bind in a sequential fashion. Binds GTP-bound translation factors.

Functionally, forms part of the ribosomal stalk which helps the ribosome interact with GTP-bound translation factors. Is thus essential for accurate translation. This chain is Large ribosomal subunit protein bL12, found in Aquifex aeolicus (strain VF5).